The sequence spans 391 residues: Formate-dependent phosphoribosylglycinamide formyltransferase (391 aa).

N(1)-(5-phospho-beta-D-ribosyl)glycinamide-binding positions include 20 to 21 (EL) and Glu80. ATP is bound by residues Arg112, Lys153, 158–163 (SSGKGQ), 193–196 (EGFI), and Glu201. The ATP-grasp domain maps to 117 to 306 (RLAAEELGLT…EFALHVRAFT (190 aa)). Mg(2+)-binding residues include Glu265 and Glu277. Residues Asp284, Lys354, and 361–362 (RR) each bind N(1)-(5-phospho-beta-D-ribosyl)glycinamide.

It belongs to the PurK/PurT family. As to quaternary structure, homodimer.

The catalysed reaction is N(1)-(5-phospho-beta-D-ribosyl)glycinamide + formate + ATP = N(2)-formyl-N(1)-(5-phospho-beta-D-ribosyl)glycinamide + ADP + phosphate + H(+). It participates in purine metabolism; IMP biosynthesis via de novo pathway; N(2)-formyl-N(1)-(5-phospho-D-ribosyl)glycinamide from N(1)-(5-phospho-D-ribosyl)glycinamide (formate route): step 1/1. Its function is as follows. Involved in the de novo purine biosynthesis. Catalyzes the transfer of formate to 5-phospho-ribosyl-glycinamide (GAR), producing 5-phospho-ribosyl-N-formylglycinamide (FGAR). Formate is provided by PurU via hydrolysis of 10-formyl-tetrahydrofolate. The sequence is that of Formate-dependent phosphoribosylglycinamide formyltransferase from Vibrio vulnificus (strain CMCP6).